A 335-amino-acid chain; its full sequence is Nucleoid-associated protein YejK (335 aa).

It belongs to the YejK family.

Its subcellular location is the cytoplasm. The protein localises to the nucleoid. The polypeptide is Nucleoid-associated protein YejK (Escherichia coli (strain K12 / MC4100 / BW2952)).